Consider the following 376-residue polypeptide: Multicilin (376 aa).

A coiled-coil region spans residues Glu165–Leu213. The tract at residues Glu230 to Ser261 is disordered. Residues Thr331–Asn376 are TIRT domain.

It belongs to the geminin family. In terms of assembly, component of the EDM complex, at least composed of e2f4, e2f5, mcidas and tfdp1.

Its subcellular location is the nucleus. Functionally, transcription regulator specifically required for multiciliate cell differentiation. Acts in a multiprotein complex containing e2f4 and e2f5 that binds and activate genes required for centriole biogenesis. Activates genes required for centriole assembly (plk4, cep152) and genes specifically required for motile cilia formation (foxj1). Also promotes the deuterosome pathway of centriole biogenesis by activating expression of deup1, but not its paralog cep63. The protein is Multicilin (mcidas) of Xenopus tropicalis (Western clawed frog).